The primary structure comprises 371 residues: MRILFVGPPLYGLLYPVLSLAQAFRVNGHEVLIASGGQFAQKAAEAGLVVFDAAPGLDSEAGYRHHEAQRKKSNIGTQMGNFSFFSEEMADHLVEFAGHWRPDLIIYPPLGVIGPLIAAKYDIPVVMQTVGFGHTPWHIRGVTRSLTDAYRRHNVGATPRDMAWIDVTPPSMSILENDGEPIIPMQYVPYNGGAVWEPWWERRPDRKRLLVSLGTVKPMVDGLDLIAWVMDSASEVDAEIILHISANARSDLRSLPSNVRLVDWIPMGVFLNGADGFIHHGGAGNTLTALHAGIPQIVFGQGADRPVNARVVAERGCGIIPGDVGLSSNMINAFLNNRSLRKASEEVAAEMAAQPCPGEVAKSLITMVQKG.

It belongs to the glycosyltransferase 28 family.

It localises to the cytoplasm. The enzyme catalyses enterobactin + UDP-alpha-D-glucose = monoglucosyl-enterobactin + UDP. The catalysed reaction is monoglucosyl-enterobactin + UDP-alpha-D-glucose = diglucosyl-enterobactin + UDP + H(+). It catalyses the reaction diglucosyl-enterobactin + UDP-alpha-D-glucose = triglucosyl-enterobactin + UDP + H(+). It functions in the pathway siderophore biosynthesis; enterobactin biosynthesis. Its function is as follows. Catalyzes the successive monoglucosylation, diglucosylation and triglucosylation of enterobactin (Ent). Transfers glucosyl groups from uridine-5'-diphosphoglucose (UDP-Glc) to C5 of one, two or three of the 2,3-dihydroxybenzoyl (DHB) units of Ent to yield monoglucosyl-C-Ent (MGE), diglucosyl-C-Ent (DGE) and triglucosyl-C-Ent (TGE). Glucosylation decreases the membrane affinity of Ent and increases the iron acquisition rate. This is Enterobactin C-glucosyltransferase from Escherichia coli O6:H1 (strain CFT073 / ATCC 700928 / UPEC).